The primary structure comprises 57 residues: Phosphatase RapH inhibitor (57 aa).

2 consecutive propeptides follow at residues Met1 to Ser34 and Tyr41 to Ser57. The tract at residues Thr26 to Ser57 is disordered.

This sequence belongs to the Phr family. Contains a predicted signal peptide cleavage site in the N-terminal region, however the propeptide is probably only subject to processing events at the ends of the mature peptide.

The protein localises to the secreted. Its subcellular location is the cytoplasm. Its function is as follows. Signaling molecule involved the regulation of both sporulation and competence. Secreted during production, but the mature peptide acts intracellularly, indicating that it needs to be imported into the cell to function. Acts by inhibiting RapH activity. Can inhibit both RapH activities, the dephosphorylation of Spo0F and the sequestration of ComA. The chain is Phosphatase RapH inhibitor (phrH) from Bacillus subtilis (strain 168).